We begin with the raw amino-acid sequence, 300 residues long: uncharacterized protein (300 aa).

Catalysis depends on S49, which acts as the Charge relay system. The active-site Proton donor is the Y137. K165 serves as the catalytic Schiff-base intermediate with substrate.

This sequence belongs to the DapA family. Homotetramer.

It localises to the cytoplasm. Functionally, upon expression in E.coli complements a dapA deletion mutation, but this may not be its physiological function. This is an uncharacterized protein from Rhizobium meliloti (Ensifer meliloti).